The sequence spans 493 residues: UDP-N-acetylmuramoyl-L-alanyl-D-glutamate--2,6-diaminopimelate ligase (493 aa).

Residues leucine 30 and serine 32 each contribute to the UDP-N-acetyl-alpha-D-muramoyl-L-alanyl-D-glutamate site. Glycine 117–threonine 123 contributes to the ATP binding site. UDP-N-acetyl-alpha-D-muramoyl-L-alanyl-D-glutamate is bound by residues asparagine 158, threonine 159–threonine 160, serine 186, glutamine 192, and arginine 194. At lysine 226 the chain carries N6-carboxylysine. Meso-2,6-diaminopimelate-binding positions include arginine 388, aspartate 412–arginine 415, glycine 463, and glutamate 467. Residues aspartate 412 to arginine 415 carry the Meso-diaminopimelate recognition motif motif.

The protein belongs to the MurCDEF family. MurE subfamily. It depends on Mg(2+) as a cofactor. Carboxylation is probably crucial for Mg(2+) binding and, consequently, for the gamma-phosphate positioning of ATP.

The protein localises to the cytoplasm. It carries out the reaction UDP-N-acetyl-alpha-D-muramoyl-L-alanyl-D-glutamate + meso-2,6-diaminopimelate + ATP = UDP-N-acetyl-alpha-D-muramoyl-L-alanyl-gamma-D-glutamyl-meso-2,6-diaminopimelate + ADP + phosphate + H(+). The protein operates within cell wall biogenesis; peptidoglycan biosynthesis. Functionally, catalyzes the addition of meso-diaminopimelic acid to the nucleotide precursor UDP-N-acetylmuramoyl-L-alanyl-D-glutamate (UMAG) in the biosynthesis of bacterial cell-wall peptidoglycan. This chain is UDP-N-acetylmuramoyl-L-alanyl-D-glutamate--2,6-diaminopimelate ligase, found in Vibrio vulnificus (strain YJ016).